The primary structure comprises 571 residues: MSRTLDRRQYAQIYGPTTGDRLRLGDTALVLEVERDLTTYGDECVFGGGKVLRDGMGQAAGAPPAQVLDLVITNALVVDHAGIFKADVGVRAGRIAALGKAGNPGVMAGVTPGMIVGPGTEVIAGEGLILTAGGIDTHIHFVSPQQAAEAIASGVTTLLGGGTGPATGTNATTCTPGAWNVARMLQATDALPVNVGLLGKGNASSPEGLAEQLRAGAAGLKLHEDWGTTPAAIDACLRVAEAHDVQVAIHTDTLNESGCAEDSIAAFAGRTIHTFHTEGAGGGHAPDIIRVCGEPNVLPSSTNPTRPFTVNTLDEHLDMLVVCHHLDPSLPEDLAFAESRIRGETIAAEDVLHDLGAISMMSSDSQAMGRVGEVVTRTWQTADKMRRQRGRLPGERGDHDNLRIRRYVAKYTVNPAVAHGLADEVGSVEPGKLADLVLWRPAFFGAKPELVLKGGLIAWAQMGDANASIPTPQPVLARPMFGALGRALGATCVAFVAGAALEDGAVQGYGLSKRLVAVRGCRGLGKRDMRLNDALPRMEVDPETYEVRADGELLRCEPAARLPLAQRYFLF.

A Urease domain is found at 133–571 (GGIDTHIHFV…LPLAQRYFLF (439 aa)). Residues His138, His140, and Lys221 each contribute to the Ni(2+) site. Residue Lys221 is modified to N6-carboxylysine. His223 serves as a coordination point for substrate. Ni(2+)-binding residues include His250 and His276. His324 serves as the catalytic Proton donor. Asp364 lines the Ni(2+) pocket.

This sequence belongs to the metallo-dependent hydrolases superfamily. Urease alpha subunit family. In terms of assembly, heterotrimer of UreA (gamma), UreB (beta) and UreC (alpha) subunits. Three heterotrimers associate to form the active enzyme. It depends on Ni cation as a cofactor. Post-translationally, carboxylation allows a single lysine to coordinate two nickel ions.

Its subcellular location is the cytoplasm. The enzyme catalyses urea + 2 H2O + H(+) = hydrogencarbonate + 2 NH4(+). Its pathway is nitrogen metabolism; urea degradation; CO(2) and NH(3) from urea (urease route): step 1/1. This chain is Urease subunit alpha, found in Anaeromyxobacter sp. (strain K).